The chain runs to 166 residues: ATP synthase subunit b (166 aa).

A helical transmembrane segment spans residues 27–47; the sequence is FFVVLLIFLIVLGVIAKWVVP. The tract at residues 124–143 is disordered; sequence SADQQLSQQGSAAQSELQSS.

Belongs to the ATPase B chain family. In terms of assembly, F-type ATPases have 2 components, F(1) - the catalytic core - and F(0) - the membrane proton channel. F(1) has five subunits: alpha(3), beta(3), gamma(1), delta(1), epsilon(1). F(0) has three main subunits: a(1), b(2) and c(10-14). The alpha and beta chains form an alternating ring which encloses part of the gamma chain. F(1) is attached to F(0) by a central stalk formed by the gamma and epsilon chains, while a peripheral stalk is formed by the delta and b chains.

The protein localises to the cell membrane. F(1)F(0) ATP synthase produces ATP from ADP in the presence of a proton or sodium gradient. F-type ATPases consist of two structural domains, F(1) containing the extramembraneous catalytic core and F(0) containing the membrane proton channel, linked together by a central stalk and a peripheral stalk. During catalysis, ATP synthesis in the catalytic domain of F(1) is coupled via a rotary mechanism of the central stalk subunits to proton translocation. Its function is as follows. Component of the F(0) channel, it forms part of the peripheral stalk, linking F(1) to F(0). The polypeptide is ATP synthase subunit b (Mycolicibacterium vanbaalenii (strain DSM 7251 / JCM 13017 / BCRC 16820 / KCTC 9966 / NRRL B-24157 / PYR-1) (Mycobacterium vanbaalenii)).